The sequence spans 469 residues: MSSGKITQIIGPVVDVEFGSDAKLPEINNALIVYKDVNGLKTKITLEVALELGDGAVRTIAMESTDGLTRGLEVLDTGKAVSVPVGEATLGRVFNVLGDVIDGGEEFAADAERNPIHKKAPTFDELSTANEVLVTGIKVVDLLAPYLKGGKVGLFGGAGVGKTVLIQELIHNIAQEHGGISVFTGVGERTREGNDLYWEMKESGVIEKTAMVFGQMNEPPGARMRVALTGLTIAEYFRDVQGQDVLLFIDNIFRFTQAGSEVSALLGRMPSAVGYQPTLATEMGQLQERITSTKKGSVTSIQAIYVPADDYTDPAPATAFAHLDATTNLERRLTQMGIYPAVDPLASSSRALTPEIVGEEHYEVAMEVQRVLQRYKELQDIIAILGMDELSDDEKILVGRARRIQFFLSQNFHVAEQFTGQPGSYVPIDKTVHDFKEILEGKYDEVPEDAFRGVGPIEDVLEKAKSMGY.

Glycine 156–threonine 163 is a binding site for ATP.

This sequence belongs to the ATPase alpha/beta chains family. As to quaternary structure, F-type ATPases have 2 components, CF(1) - the catalytic core - and CF(0) - the membrane proton channel. CF(1) has five subunits: alpha(3), beta(3), gamma(1), delta(1), epsilon(1). CF(0) has three main subunits: a(1), b(2) and c(9-12). The alpha and beta chains form an alternating ring which encloses part of the gamma chain. CF(1) is attached to CF(0) by a central stalk formed by the gamma and epsilon chains, while a peripheral stalk is formed by the delta and b chains.

It is found in the cell membrane. The enzyme catalyses ATP + H2O + 4 H(+)(in) = ADP + phosphate + 5 H(+)(out). Produces ATP from ADP in the presence of a proton gradient across the membrane. The catalytic sites are hosted primarily by the beta subunits. This Lactococcus lactis subsp. lactis (strain IL1403) (Streptococcus lactis) protein is ATP synthase subunit beta.